The sequence spans 823 residues: Leucine--tRNA ligase (823 aa).

A 'HIGH' region motif is present at residues 42–52 (PYPSGTLHMGH). The 'KMSKS' region motif lies at 575–579 (KMSKS). Lys578 serves as a coordination point for ATP.

The protein belongs to the class-I aminoacyl-tRNA synthetase family.

The protein localises to the cytoplasm. It catalyses the reaction tRNA(Leu) + L-leucine + ATP = L-leucyl-tRNA(Leu) + AMP + diphosphate. The polypeptide is Leucine--tRNA ligase (Legionella pneumophila (strain Lens)).